Reading from the N-terminus, the 439-residue chain is Magnesium-dependent glutamate N-prenyltransferase (439 aa).

The Mg(2+) site is built by Asn-322, Thr-326, Glu-330, and Phe-337.

Belongs to the terpene synthase family. Requires Mg(2+) as cofactor.

It carries out the reaction dimethylallyl diphosphate + L-glutamate = prekainate + diphosphate. Its pathway is secondary metabolite biosynthesis. Magnesium-dependent glutamate N-prenyltransferase: part of the gene cluster that mediates the biosynthesis of kainic acid (KA) and derivatives, natural products with neurochemical activity acting as ionotropic glutamate receptor (iGluR) agonists, thus being neurotoxins. Catalyzes the conversion of L-glutamic acid (L-Glu) to prekainic acid in the presence of dimethylallyl diphosphate (DMAPP). Can also use geranyl diphosphate (GPP) as substrate, thus leading to the formation of N-geranyl-L-glutamic acid (L-NGG). The polypeptide is Magnesium-dependent glutamate N-prenyltransferase (Digenea simplex (Marine red alga)).